A 598-amino-acid chain; its full sequence is Elongation factor 4 (598 aa).

The region spanning 2–184 is the tr-type G domain; the sequence is KQIRNFSIIA…RLVKEIPAPE (183 aa). GTP-binding positions include 14-19 and 131-134; these read DHGKST and NKID.

The protein belongs to the TRAFAC class translation factor GTPase superfamily. Classic translation factor GTPase family. LepA subfamily.

It is found in the cell inner membrane. It carries out the reaction GTP + H2O = GDP + phosphate + H(+). Functionally, required for accurate and efficient protein synthesis under certain stress conditions. May act as a fidelity factor of the translation reaction, by catalyzing a one-codon backward translocation of tRNAs on improperly translocated ribosomes. Back-translocation proceeds from a post-translocation (POST) complex to a pre-translocation (PRE) complex, thus giving elongation factor G a second chance to translocate the tRNAs correctly. Binds to ribosomes in a GTP-dependent manner. The chain is Elongation factor 4 from Photorhabdus laumondii subsp. laumondii (strain DSM 15139 / CIP 105565 / TT01) (Photorhabdus luminescens subsp. laumondii).